A 698-amino-acid polypeptide reads, in one-letter code: Iron-sulfur clusters transporter ATM1, mitochondrial (698 aa).

The N-terminal 23 residues, 1-23 (MIPQLLQRSSRACPRYNPALYRL), are a transit peptide targeting the mitochondrion. At 24–113 (STTSQQRPGL…PKDDWGTKLR (90 aa)) the chain is on the mitochondrial matrix side. Residues 32–63 (GLTQTFWTSAPRREQPRTPTDSKPTTTKPSAV) form a disordered region. Positions 48–61 (RTPTDSKPTTTKPS) are enriched in low complexity. Residues 114–135 (VSLAVSLLIGAKVLNVQVPFYF) form a helical membrane-spanning segment. An ABC transmembrane type-1 domain is found at 114 to 404 (VSLAVSLLIG…LGSVYRELRQ (291 aa)). Topologically, residues 136–158 (KSIVDSMNIDVAAVGGTATTVAG) are mitochondrial intermembrane. Residues 159–182 (AMILAYGASRIGATVFQELRNAVF) form a helical membrane-spanning segment. Topologically, residues 183–231 (ASVAQNAIRKVACNVFDHLLRLDLTFHLSKQTGGLTRALDRGTKGISFI) are mitochondrial matrix. Residues 232-255 (LSSMVFHVLPTALEISMVCGILTY) traverse the membrane as a helical segment. A topological domain (mitochondrial intermembrane) is located at residue N256. Residues 257-277 (YGAKFAALTVLTMVSYTAFTI) form a helical membrane-spanning segment. The Mitochondrial matrix portion of the chain corresponds to 278–343 (WTTAWRTKFR…NSIKVATSLA (66 aa)). Glutathione-binding positions include 283–287 (RTKFR) and 346–349 (NSGQ). A helical transmembrane segment spans residues 344–362 (LLNSGQNIIFSSALTGMMY). The Mitochondrial intermembrane segment spans residues 363-377 (LAANGVAEGTLTVGD). Residues 378–399 (LVMVNQLVFQLSVPLNFLGSVY) form a helical membrane-spanning segment. G396 lines the glutathione pocket. Residues 400 to 698 (RELRQSLLDM…EEENDEQKKN (299 aa)) lie on the Mitochondrial matrix side of the membrane. In terms of domain architecture, ABC transporter spans 439–675 (IKFENVNFAY…DGVYAELWSA (237 aa)). ATP contacts are provided by residues Y448 and 472–483 (GPSGCGKSTLLR). The segment at 679–698 (MFGEDGKEKSEEENDEQKKN) is disordered. A compositionally biased stretch (basic and acidic residues) spans 682–698 (EDGKEKSEEENDEQKKN).

This sequence belongs to the ABC transporter superfamily. ABCB family. Heavy Metal importer (TC 3.A.1.210) subfamily. Homodimer.

The protein localises to the mitochondrion inner membrane. Functionally, performs an essential function in the generation of cytoplasmic iron-sulfur proteins by mediating the ATP-dependent export of Fe/S cluster precursors synthesized by NFS1 and other mitochondrial proteins. Hydrolyzes ATP. Binds glutathione and may function by transporting a glutathione-conjugated iron-sulfur compound. The sequence is that of Iron-sulfur clusters transporter ATM1, mitochondrial from Gibberella zeae (strain ATCC MYA-4620 / CBS 123657 / FGSC 9075 / NRRL 31084 / PH-1) (Wheat head blight fungus).